The following is a 58-amino-acid chain: Large ribosomal subunit protein bL32 (58 aa).

The tract at residues 1–23 (MAVPARHTSSAKKNRRRTHYKLT) is disordered. The segment covering 9–20 (SSAKKNRRRTHY) has biased composition (basic residues).

The protein belongs to the bacterial ribosomal protein bL32 family.

The protein is Large ribosomal subunit protein bL32 (rpmF) of Lactococcus lactis subsp. cremoris (Streptococcus cremoris).